A 1488-amino-acid polypeptide reads, in one-letter code: Chromosome partition protein MukB (1488 aa).

34 to 41 (GGNGAGKS) contacts ATP. Coiled-coil stretches lie at residues 326–418 (LEAD…QYNQ), 444–472 (LDTF…QTAH), and 509–602 (RHLA…QRAP). The interval 666–783 (PGGAEDQRLN…SLPIFGRAAR (118 aa)) is flexible hinge. 3 coiled-coil regions span residues 835 to 923 (EAEI…AKLE), 977 to 1116 (EMLS…AKAG), and 1209 to 1265 (VEAI…LQSV). The tract at residues 1049 to 1074 (ADSGAEERARQRRDELHAQLSNNRSR) is disordered. Positions 1051 to 1065 (SGAEERARQRRDELH) are enriched in basic and acidic residues.

This sequence belongs to the SMC family. MukB subfamily. In terms of assembly, homodimerization via its hinge domain. Binds to DNA via its C-terminal region. Interacts, and probably forms a ternary complex, with MukE and MukF via its C-terminal region. The complex formation is stimulated by calcium or magnesium. Interacts with tubulin-related protein FtsZ.

Its subcellular location is the cytoplasm. The protein resides in the nucleoid. Functionally, plays a central role in chromosome condensation, segregation and cell cycle progression. Functions as a homodimer, which is essential for chromosome partition. Involved in negative DNA supercoiling in vivo, and by this means organize and compact chromosomes. May achieve or facilitate chromosome segregation by condensation DNA from both sides of a centrally located replisome during cell division. The polypeptide is Chromosome partition protein MukB (Salmonella typhimurium (strain LT2 / SGSC1412 / ATCC 700720)).